Reading from the N-terminus, the 285-residue chain is Sulfotransferase 2A1 (285 aa).

6 residues coordinate 3'-phosphoadenylyl sulfate: lysine 44, serine 45, glycine 46, threonine 47, asparagine 48, and tryptophan 49. Histidine 99 serves as the catalytic Proton acceptor. 8 residues coordinate 3'-phosphoadenylyl sulfate: arginine 121, serine 129, tyrosine 184, serine 218, methionine 223, arginine 247, lysine 248, and glycine 249.

Belongs to the sulfotransferase 1 family. As to quaternary structure, homodimer. Highly expressed in liver.

The protein localises to the cytoplasm. It catalyses the reaction an alcohol + 3'-phosphoadenylyl sulfate = an alkyl sulfate + adenosine 3',5'-bisphosphate + H(+). The catalysed reaction is taurolithocholate + 3'-phosphoadenylyl sulfate = taurolithocholate 3-sulfate + adenosine 3',5'-bisphosphate + H(+). It carries out the reaction pregnenolone + 3'-phosphoadenylyl sulfate = pregnenolone sulfate + adenosine 3',5'-bisphosphate + H(+). The enzyme catalyses 3beta-hydroxyandrost-5-en-17-one + 3'-phosphoadenylyl sulfate = dehydroepiandrosterone 3-sulfate + adenosine 3',5'-bisphosphate + H(+). It catalyses the reaction lithocholate + 3'-phosphoadenylyl sulfate = lithocholate sulfate + adenosine 3',5'-bisphosphate + H(+). The catalysed reaction is (24S)-hydroxycholesterol + 3'-phosphoadenylyl sulfate = (24S)-hydroxycholesterol 24-sulfate + adenosine 3',5'-bisphosphate + H(+). It carries out the reaction (24S)-hydroxycholesterol + 3'-phosphoadenylyl sulfate = (24S)-hydroxycholesterol 3-sulfate + adenosine 3',5'-bisphosphate + H(+). The enzyme catalyses (24S)-hydroxycholesterol 24-sulfate + 3'-phosphoadenylyl sulfate = (24S)-hydroxycholesterol 3,24-disulfate + adenosine 3',5'-bisphosphate + H(+). It catalyses the reaction androsterone + 3'-phosphoadenylyl sulfate = androsterone 3alpha-sulfate + adenosine 3',5'-bisphosphate + H(+). Its function is as follows. Sulfotransferase that utilizes 3'-phospho-5'-adenylyl sulfate (PAPS) as sulfonate donor to catalyze the sulfonation of steroids and bile acids in the liver and adrenal glands. Mediates the sulfation of a wide range of steroids and sterols, including pregnenolone, androsterone, DHEA, bile acids, cholesterol and as well many xenobiotics that contain alcohol and phenol functional groups. Sulfonation increases the water solubility of most compounds, and therefore their renal excretion, but it can also result in bioactivation to form active metabolites. Plays an important role in maintening steroid and lipid homeostasis. Plays a key role in bile acid metabolism. In addition, catalyzes the metabolic activation of potent carcinogenic polycyclic arylmethanols. The polypeptide is Sulfotransferase 2A1 (Sult2a1) (Mus musculus (Mouse)).